Here is a 151-residue protein sequence, read N- to C-terminus: UPF0208 membrane protein YfbV (151 aa).

A run of 2 helical transmembrane segments spans residues 46–65 (FGIR…QIAL) and 69–91 (LGPA…WWLG).

This sequence belongs to the UPF0208 family.

The protein localises to the cell inner membrane. The polypeptide is UPF0208 membrane protein YfbV (yfbV) (Photorhabdus temperata).